The sequence spans 354 residues: Photosystem II D2 protein (354 aa).

Threonine 2 bears the N-acetylthreonine mark. Threonine 2 bears the Phosphothreonine mark. A helical membrane pass occupies residues 42-62 (CAYFALGGWFTGTTFVTSWYT). Residue histidine 119 participates in chlorophyll a binding. A helical transmembrane segment spans residues 126–142 (GFMLRQFELARSVQLRP). Glutamine 131 and asparagine 144 together coordinate pheophytin a. The chain crosses the membrane as a helical span at residues 154 to 167 (VFVSVFLIYPLGQS). Histidine 199 contributes to the chlorophyll a binding site. A helical membrane pass occupies residues 209–229 (AALLCAIHGATVENTLFEDGD). The a plastoquinone site is built by histidine 216 and phenylalanine 263. Position 216 (histidine 216) interacts with Fe cation. Fe cation is bound at residue histidine 270. The helical transmembrane segment at 280-296 (GLWMSALGVVGLALNLR) threads the bilayer.

The protein belongs to the reaction center PufL/M/PsbA/D family. PSII is composed of 1 copy each of membrane proteins PsbA, PsbB, PsbC, PsbD, PsbE, PsbF, PsbH, PsbI, PsbJ, PsbK, PsbL, PsbM, PsbT, PsbX, PsbY, PsbZ, Psb30/Ycf12, at least 3 peripheral proteins of the oxygen-evolving complex and a large number of cofactors. It forms dimeric complexes. Requires The D1/D2 heterodimer binds P680, chlorophylls that are the primary electron donor of PSII, and subsequent electron acceptors. It shares a non-heme iron and each subunit binds pheophytin, quinone, additional chlorophylls, carotenoids and lipids. There is also a Cl(-1) ion associated with D1 and D2, which is required for oxygen evolution. The PSII complex binds additional chlorophylls, carotenoids and specific lipids. as cofactor.

Its subcellular location is the plastid. It localises to the chloroplast thylakoid membrane. The enzyme catalyses 2 a plastoquinone + 4 hnu + 2 H2O = 2 a plastoquinol + O2. Photosystem II (PSII) is a light-driven water:plastoquinone oxidoreductase that uses light energy to abstract electrons from H(2)O, generating O(2) and a proton gradient subsequently used for ATP formation. It consists of a core antenna complex that captures photons, and an electron transfer chain that converts photonic excitation into a charge separation. The D1/D2 (PsbA/PsbD) reaction center heterodimer binds P680, the primary electron donor of PSII as well as several subsequent electron acceptors. D2 is needed for assembly of a stable PSII complex. This chain is Photosystem II D2 protein, found in Piper cenocladum (Ant piper).